The primary structure comprises 190 residues: Protein LZIC (190 aa).

The stretch at 2 to 63 (ASRGKTETSK…SEFNDSLKKI (62 aa)) forms a coiled coil.

Belongs to the CTNNBIP1 family. In terms of assembly, does not interact with CTNNB1. Ubiquitously expressed, with highest levels in kidney. Up-regulated in several cases of gastric cancers.

This chain is Protein LZIC (LZIC), found in Homo sapiens (Human).